Reading from the N-terminus, the 607-residue chain is UvrABC system protein C (607 aa).

Residues 16–94 form the GIY-YIG domain; it reads GRPGVYRMFD…IKEWRPPYNI (79 aa). One can recognise a UVR domain in the interval 203-238; that stretch reads QQLGNELNAEMEKAAMALNFEKAAELRDQIALLRRV.

The protein belongs to the UvrC family. Interacts with UvrB in an incision complex.

Its subcellular location is the cytoplasm. Functionally, the UvrABC repair system catalyzes the recognition and processing of DNA lesions. UvrC both incises the 5' and 3' sides of the lesion. The N-terminal half is responsible for the 3' incision and the C-terminal half is responsible for the 5' incision. In Pseudomonas entomophila (strain L48), this protein is UvrABC system protein C.